We begin with the raw amino-acid sequence, 356 residues long: Glycerol-1-phosphate dehydrogenase [NAD(P)+] (356 aa).

NAD(+) is bound by residues 103 to 107 (GRSID) and 125 to 128 (TAAS). Residue Asp130 coordinates substrate. Ser134 is an NAD(+) binding site. Asp177 provides a ligand contact to substrate. The Zn(2+) site is built by Asp177 and His257. His261 serves as a coordination point for substrate. His273 provides a ligand contact to Zn(2+).

The protein belongs to the glycerol-1-phosphate dehydrogenase family. Zn(2+) is required as a cofactor.

It is found in the cytoplasm. It catalyses the reaction sn-glycerol 1-phosphate + NAD(+) = dihydroxyacetone phosphate + NADH + H(+). The enzyme catalyses sn-glycerol 1-phosphate + NADP(+) = dihydroxyacetone phosphate + NADPH + H(+). Its pathway is membrane lipid metabolism; glycerophospholipid metabolism. In terms of biological role, catalyzes the NAD(P)H-dependent reduction of dihydroxyacetonephosphate (DHAP or glycerone phosphate) to glycerol 1-phosphate (G1P). The G1P thus generated is used as the glycerophosphate backbone of phospholipids in the cellular membranes of Archaea. This is Glycerol-1-phosphate dehydrogenase [NAD(P)+] from Methanosarcina mazei (strain ATCC BAA-159 / DSM 3647 / Goe1 / Go1 / JCM 11833 / OCM 88) (Methanosarcina frisia).